A 187-amino-acid polypeptide reads, in one-letter code: Casparian strip membrane protein 1 (187 aa).

The span at 1–10 (MKGSSEHGET) shows a compositional bias: basic and acidic residues. Positions 1 to 20 (MKGSSEHGETSKQAPLGSSR) are disordered. Residues 1 to 27 (MKGSSEHGETSKQAPLGSSRGVSKGVS) lie on the Cytoplasmic side of the membrane. The helical transmembrane segment at 28 to 48 (VLDLILRFIAIIGTLASAIAM) threads the bilayer. The Extracellular segment spans residues 49–75 (GTTNETLPFFTQFIRFKAQYSDLPTLT). Residue asparagine 52 is glycosylated (N-linked (GlcNAc...) asparagine). The chain crosses the membrane as a helical span at residues 76-96 (FFVVANSIVCAYLTLSLPLSI). Topologically, residues 97–115 (VHIIRSRAKYSRLLLVVLD) are cytoplasmic. The chain crosses the membrane as a helical span at residues 116–136 (AAMLALVTPGASAAAAIVYLA). The Extracellular portion of the chain corresponds to 137 to 162 (HKGNVRANWLAICQQFDSFCERISGC). Residues 163-183 (LIGSFGAMVMLVLLLLLSAIA) form a helical membrane-spanning segment. The Cytoplasmic segment spans residues 184 to 187 (LARR).

This sequence belongs to the Casparian strip membrane proteins (CASP) family. As to quaternary structure, homodimer and heterodimers.

Its subcellular location is the cell membrane. Functionally, regulates membrane-cell wall junctions and localized cell wall deposition. Required for establishment of the Casparian strip membrane domain (CSD) and the subsequent formation of Casparian strips, a cell wall modification of the root endodermis that determines an apoplastic barrier between the intraorganismal apoplasm and the extraorganismal apoplasm and prevents lateral diffusion. This is Casparian strip membrane protein 1 from Zea mays (Maize).